A 243-amino-acid polypeptide reads, in one-letter code: Probable transcriptional regulatory protein BRE_29 (243 aa).

The protein belongs to the TACO1 family.

Its subcellular location is the cytoplasm. The sequence is that of Probable transcriptional regulatory protein BRE_29 from Borrelia recurrentis (strain A1).